The following is a 419-amino-acid chain: Protein phosphatase methylesterase 1 (419 aa).

Residues 1–12 show a composition bias toward basic residues; it reads MSQLHRGMHKKP. Positions 1-75 are disordered; the sequence is MSQLHRGMHK…KSAASPTVPA (75 aa). Acidic residues predominate over residues 32 to 52; it reads TETEETVECTEEEEEQDETDG. Catalysis depends on residues Ser230, Asp256, and His383.

Belongs to the AB hydrolase superfamily.

It carries out the reaction [phosphatase 2A protein]-C-terminal L-leucine methyl ester + H2O = [phosphatase 2A protein]-C-terminal L-leucine + methanol + H(+). In terms of biological role, demethylates proteins that have been reversibly carboxymethylated. Demethylates the phosphatase PP2A catalytic subunit. This chain is Protein phosphatase methylesterase 1 (PPE1), found in Yarrowia lipolytica (strain CLIB 122 / E 150) (Yeast).